Consider the following 80-residue polypeptide: MKSSHIALLCIVVLSLFALHECCEQGGQRHSQKVNEACVPGPCHPLVPHCWCCEHLRGIRPQCCWSGSTGRDYCNQQCNL.

A signal peptide spans 1–22 (MKSSHIALLCIVVLSLFALHEC). Cystine bridges form between C38-C52, C43-C78, C50-C74, and C53-C64.

Belongs to the MEG family. In terms of tissue distribution, expressed in leaves.

The polypeptide is EMBRYO SURROUNDING FACTOR 1-like protein 1 (ESFL1) (Arabidopsis thaliana (Mouse-ear cress)).